Consider the following 425-residue polypeptide: Metacaspase-1 (425 aa).

Positions 1-110 (MSYNSNPYNG…PQLPNTQTQS (110 aa)) are disordered. Over residues 13–28 (YPPYNTYTRPNYSPNN) the composition is skewed to low complexity. Polar residues-rich tracts occupy residues 29–38 (GSQSNNTVHQ) and 88–110 (TGANSYGNPNYSGPQLPNTQTQS). Active-site residues include His214 and Cys270.

This sequence belongs to the peptidase C14B family.

The protein localises to the cytoplasm. It is found in the nucleus. Involved in cell death (apoptosis). This Schizosaccharomyces pombe (strain 972 / ATCC 24843) (Fission yeast) protein is Metacaspase-1 (pca1).